We begin with the raw amino-acid sequence, 159 residues long: Fimbrial protein MyfA (159 aa).

The N-terminal stretch at 1–29 (MNMKKFVKKPLAIAVLMLASGGMVNMVHA) is a signal peptide.

As to quaternary structure, forms a homomer composed of subunits assembled in a large structure resistant to proteases and chaotropic agents.

It localises to the fimbrium. Its function is as follows. Major pilus subunit. Expressed only in pathogenic serotypes, it is part of myf, a probable virulence factor. The protein is Fimbrial protein MyfA (myfA) of Yersinia enterocolitica.